We begin with the raw amino-acid sequence, 379 residues long: Probable leucine aminopeptidase ARB_01443 (379 aa).

Positions 1 to 18 (MKIATLAVVSAFAATAIA) are cleaved as a signal peptide. Residues His-182 and Asp-201 each contribute to the Zn(2+) site. N-linked (GlcNAc...) asparagine glycans are attached at residues Asn-202 and Asn-226. Zn(2+)-binding residues include Glu-240 and Asp-267. Cys-312 and Cys-316 are oxidised to a cystine. His-345 contributes to the Zn(2+) binding site.

This sequence belongs to the peptidase M28 family. M28E subfamily. In terms of assembly, monomer. It depends on Zn(2+) as a cofactor.

The protein localises to the secreted. In terms of biological role, probable extracellular aminopeptidase which contributes to pathogenicity. This Arthroderma benhamiae (strain ATCC MYA-4681 / CBS 112371) (Trichophyton mentagrophytes) protein is Probable leucine aminopeptidase ARB_01443.